The chain runs to 440 residues: Serine hydroxymethyltransferase (440 aa).

123–125 (GHI) is a (6S)-5,6,7,8-tetrahydrofolate binding site. An N6-(pyridoxal phosphate)lysine modification is found at lysine 238.

The protein belongs to the SHMT family. As to quaternary structure, homodimer. Pyridoxal 5'-phosphate serves as cofactor.

It is found in the cytoplasm. It participates in amino-acid biosynthesis; glycine biosynthesis; glycine from L-serine: step 1/1. Functionally, catalyzes the reversible interconversion of serine and glycine with a modified folate serving as the one-carbon carrier. Also exhibits a pteridine-independent aldolase activity toward beta-hydroxyamino acids, producing glycine and aldehydes, via a retro-aldol mechanism. The protein is Serine hydroxymethyltransferase of Nitrosopumilus maritimus (strain SCM1).